Here is a 413-residue protein sequence, read N- to C-terminus: MGLEEQGRAREDTPLLGKGRPLSSKFKTFANVFIAIVGAGVLGLPYAFKRTGWLMGLLTLFSVAALINHCMMLLVHIRRKLGVSNIGSFGDLGFAACGNLGRFVVDILIILSQAGFCVGYLIFIGNTLANLSKPTKSTTLMSLRHLMGVSPKSLYIWGCFPFQLGLNSIKTLTHLAPLSIFADVVDLGAMAVVIVEDIKITVVQRPQVVAFGGMSVFFYGMGVAVYAFEGVGMVLPLESETKDKDKFGKVLALSMLFIAVMYGSFGVLGYMAFGDDTMDIITANLGAGVVSSLVQLGLCINLFFTFPLMMNPVFEIVERRFWSGMYCVWLRWLLVLAVTLVALLVPNFADFLSLVGSSVCCALGFVLPSLFHLMVFKDEMEWKQRALDVGILLLGVILGVSGTWSSLTEIFQE.

Over 1–27 the chain is Cytoplasmic; the sequence is MGLEEQGRAREDTPLLGKGRPLSSKFK. The helical transmembrane segment at 28–48 threads the bilayer; it reads TFANVFIAIVGAGVLGLPYAF. Topologically, residues 49 to 54 are vacuolar; that stretch reads KRTGWL. Residues 55–75 traverse the membrane as a helical segment; that stretch reads MGLLTLFSVAALINHCMMLLV. Over 76–103 the chain is Cytoplasmic; the sequence is HIRRKLGVSNIGSFGDLGFAACGNLGRF. A helical transmembrane segment spans residues 104 to 124; it reads VVDILIILSQAGFCVGYLIFI. Over 125–145 the chain is Vacuolar; it reads GNTLANLSKPTKSTTLMSLRH. Residues 146-166 traverse the membrane as a helical segment; sequence LMGVSPKSLYIWGCFPFQLGL. Over 167–174 the chain is Cytoplasmic; sequence NSIKTLTH. Residues 175–195 form a helical membrane-spanning segment; it reads LAPLSIFADVVDLGAMAVVIV. At 196-207 the chain is on the vacuolar side; it reads EDIKITVVQRPQ. A helical membrane pass occupies residues 208–228; the sequence is VVAFGGMSVFFYGMGVAVYAF. The Cytoplasmic segment spans residues 229–249; it reads EGVGMVLPLESETKDKDKFGK. A helical transmembrane segment spans residues 250–270; sequence VLALSMLFIAVMYGSFGVLGY. The Vacuolar portion of the chain corresponds to 271-288; it reads MAFGDDTMDIITANLGAG. The helical transmembrane segment at 289 to 309 threads the bilayer; sequence VVSSLVQLGLCINLFFTFPLM. The Cytoplasmic portion of the chain corresponds to 310 to 331; that stretch reads MNPVFEIVERRFWSGMYCVWLR. The chain crosses the membrane as a helical span at residues 332–352; that stretch reads WLLVLAVTLVALLVPNFADFL. At 353-355 the chain is on the vacuolar side; the sequence is SLV. Residues 356–376 traverse the membrane as a helical segment; the sequence is GSSVCCALGFVLPSLFHLMVF. Over 377 to 390 the chain is Cytoplasmic; sequence KDEMEWKQRALDVG. The helical transmembrane segment at 391 to 411 threads the bilayer; sequence ILLLGVILGVSGTWSSLTEIF. Topologically, residues 412 to 413 are vacuolar; sequence QE.

Belongs to the amino acid/polyamine transporter 2 family. Amino acid/auxin permease (AAAP) (TC 2.A.18.8) subfamily. Ubiquitous.

It is found in the vacuole membrane. Its function is as follows. Translocates preferentially neutral amino acids from the vacuole to the cytoplasm. This Arabidopsis thaliana (Mouse-ear cress) protein is Amino acid transporter AVT3B.